Consider the following 149-residue polypeptide: Leghemoglobin (149 aa).

The region spanning 3 to 147 is the Globin domain; the sequence is AFSEKQESLV…LAAAIKKAMG (145 aa). The residue at position 31 (Tyr31) is a Nitrated tyrosine. Ser46 contacts heme b. Phosphoserine is present on Ser46. Position 62 (His62) interacts with O2. Positions 65, 94, and 97 each coordinate heme b. At Tyr135 the chain carries Nitrated tyrosine.

The protein belongs to the plant globin family. In terms of assembly, monomer. Nitrated in effective nodules and particularly in hypoxic conditions; this mechanism may play a protective role in the symbiosis by buffering toxic peroxynitrite NO(2)(-). Nitration level decrease during nodule senescence. Post-translationally, phosphorylation at Ser-46 disrupts the molecular environment of its porphyrin ring oxygen binding pocket, thus leading to a reduced oxygen consumption and to the delivery of oxygen O(2) to symbiosomes. Root nodules.

Its subcellular location is the cytoplasm. The protein localises to the cytosol. The protein resides in the nucleus. Leghemoglobin that reversibly binds oxygen O(2) through a pentacoordinated heme iron. In root nodules, facilitates the diffusion of oxygen to the bacteroids while preventing the bacterial nitrogenase from being inactivated by buffering dioxygen, nitric oxide and carbon monoxide, and promoting the formation of reactive oxygen species (ROS, e.g. H(2)O(2)). This role is essential for symbiotic nitrogen fixation (SNF). The protein is Leghemoglobin of Canavalia lineata (Beach bean).